A 434-amino-acid polypeptide reads, in one-letter code: Ribosomal protein uS12 methylthiotransferase RimO (434 aa).

Residues 1–107 (MHLGCEKNLV…ILNVLQRIEQ (107 aa)) form the MTTase N-terminal domain. 6 residues coordinate [4Fe-4S] cluster: cysteine 5, cysteine 41, cysteine 70, cysteine 145, cysteine 149, and cysteine 152. A Radical SAM core domain is found at 131-360 (TTGKAVAYLK…ISIQQPIAEL (230 aa)). One can recognise a TRAM domain in the interval 363 to 434 (QNWIGRTVDV…DLYDLTGQVV (72 aa)).

Belongs to the methylthiotransferase family. RimO subfamily. The cofactor is [4Fe-4S] cluster.

It localises to the cytoplasm. The catalysed reaction is L-aspartate(89)-[ribosomal protein uS12]-hydrogen + (sulfur carrier)-SH + AH2 + 2 S-adenosyl-L-methionine = 3-methylsulfanyl-L-aspartate(89)-[ribosomal protein uS12]-hydrogen + (sulfur carrier)-H + 5'-deoxyadenosine + L-methionine + A + S-adenosyl-L-homocysteine + 2 H(+). Its function is as follows. Catalyzes the methylthiolation of an aspartic acid residue of ribosomal protein uS12. The polypeptide is Ribosomal protein uS12 methylthiotransferase RimO (Prochlorococcus marinus (strain SARG / CCMP1375 / SS120)).